Reading from the N-terminus, the 457-residue chain is Phosphoglucosamine mutase (457 aa).

The active-site Phosphoserine intermediate is Ser106. Positions 106, 245, 247, and 249 each coordinate Mg(2+). Ser106 is subject to Phosphoserine.

The protein belongs to the phosphohexose mutase family. The cofactor is Mg(2+). In terms of processing, activated by phosphorylation.

It carries out the reaction alpha-D-glucosamine 1-phosphate = D-glucosamine 6-phosphate. Catalyzes the conversion of glucosamine-6-phosphate to glucosamine-1-phosphate. The sequence is that of Phosphoglucosamine mutase from Methylibium petroleiphilum (strain ATCC BAA-1232 / LMG 22953 / PM1).